The sequence spans 385 residues: 8-amino-7-oxononanoate synthase (385 aa).

A substrate-binding site is contributed by Arg21. Pyridoxal 5'-phosphate is bound at residue 108–109 (GF). His133 provides a ligand contact to substrate. Pyridoxal 5'-phosphate contacts are provided by Ser179, His207, and Thr233. Lys236 carries the post-translational modification N6-(pyridoxal phosphate)lysine. Thr352 is a binding site for substrate.

The protein belongs to the class-II pyridoxal-phosphate-dependent aminotransferase family. BioF subfamily. As to quaternary structure, homodimer. Pyridoxal 5'-phosphate serves as cofactor.

The catalysed reaction is 6-carboxyhexanoyl-[ACP] + L-alanine + H(+) = (8S)-8-amino-7-oxononanoate + holo-[ACP] + CO2. The protein operates within cofactor biosynthesis; biotin biosynthesis. In terms of biological role, catalyzes the decarboxylative condensation of pimeloyl-[acyl-carrier protein] and L-alanine to produce 8-amino-7-oxononanoate (AON), [acyl-carrier protein], and carbon dioxide. This Salmonella enteritidis PT4 (strain P125109) protein is 8-amino-7-oxononanoate synthase.